The sequence spans 252 residues: Cytochrome c oxidase subunit 2 (252 aa).

The Mitochondrial intermembrane portion of the chain corresponds to 1–39; sequence MFLIMLKGHILMDAPTPWGIFFQDSASPQMEGIMELHNN. A helical transmembrane segment spans residues 40 to 59; it reads IMFYLAIILFTVTWMMITII. Residues 60-81 lie on the Mitochondrial matrix side of the membrane; sequence RNFVAKKSPIAHKYMNHGTLIE. A helical membrane pass occupies residues 82–105; that stretch reads LIWTITPAFILILIAFPSFKLLYL. The Mitochondrial intermembrane portion of the chain corresponds to 106-252; the sequence is MDEVMDPSLV…LLWLRDQMEG (147 aa). Residues histidine 184, cysteine 219, glutamate 221, cysteine 223, histidine 227, and methionine 230 each contribute to the Cu cation site. Glutamate 221 contacts Mg(2+).

This sequence belongs to the cytochrome c oxidase subunit 2 family. Component of the cytochrome c oxidase (complex IV, CIV), a multisubunit enzyme composed of a catalytic core of 3 subunits and several supernumerary subunits. The complex exists as a monomer or a dimer and forms supercomplexes (SCs) in the inner mitochondrial membrane with ubiquinol-cytochrome c oxidoreductase (cytochrome b-c1 complex, complex III, CIII). Cu cation is required as a cofactor.

The protein localises to the mitochondrion inner membrane. It carries out the reaction 4 Fe(II)-[cytochrome c] + O2 + 8 H(+)(in) = 4 Fe(III)-[cytochrome c] + 2 H2O + 4 H(+)(out). Component of the cytochrome c oxidase, the last enzyme in the mitochondrial electron transport chain which drives oxidative phosphorylation. The respiratory chain contains 3 multisubunit complexes succinate dehydrogenase (complex II, CII), ubiquinol-cytochrome c oxidoreductase (cytochrome b-c1 complex, complex III, CIII) and cytochrome c oxidase (complex IV, CIV), that cooperate to transfer electrons derived from NADH and succinate to molecular oxygen, creating an electrochemical gradient over the inner membrane that drives transmembrane transport and the ATP synthase. Cytochrome c oxidase is the component of the respiratory chain that catalyzes the reduction of oxygen to water. Electrons originating from reduced cytochrome c in the intermembrane space (IMS) are transferred via the dinuclear copper A center (CU(A)) of subunit 2 and heme A of subunit 1 to the active site in subunit 1, a binuclear center (BNC) formed by heme A3 and copper B (CU(B)). The BNC reduces molecular oxygen to 2 water molecules using 4 electrons from cytochrome c in the IMS and 4 protons from the mitochondrial matrix. The chain is Cytochrome c oxidase subunit 2 (cox2) from Emericella nidulans (Aspergillus nidulans).